We begin with the raw amino-acid sequence, 1044 residues long: Isoleucine--tRNA ligase (1044 aa).

The short motif at 49-59 (PYCSGRIHLGT) is the 'HIGH' region element. Positions 591-595 (KMSKS) match the 'KMSKS' region motif. Lysine 594 is a binding site for ATP.

The protein belongs to the class-I aminoacyl-tRNA synthetase family. IleS type 2 subfamily. In terms of assembly, monomer. It depends on Zn(2+) as a cofactor.

The protein resides in the cytoplasm. It carries out the reaction tRNA(Ile) + L-isoleucine + ATP = L-isoleucyl-tRNA(Ile) + AMP + diphosphate. Catalyzes the attachment of isoleucine to tRNA(Ile). As IleRS can inadvertently accommodate and process structurally similar amino acids such as valine, to avoid such errors it has two additional distinct tRNA(Ile)-dependent editing activities. One activity is designated as 'pretransfer' editing and involves the hydrolysis of activated Val-AMP. The other activity is designated 'posttransfer' editing and involves deacylation of mischarged Val-tRNA(Ile). The sequence is that of Isoleucine--tRNA ligase from Methanothermobacter thermautotrophicus (strain ATCC 29096 / DSM 1053 / JCM 10044 / NBRC 100330 / Delta H) (Methanobacterium thermoautotrophicum).